We begin with the raw amino-acid sequence, 753 residues long: Dolichyl-phosphate-mannose--protein mannosyltransferase 3 (753 aa).

The Cytoplasmic portion of the chain corresponds to 1–50 (MPYRVATGYSEKSTDDDLIWRTPIVKEELEDADNFLKDDAELYDKVKNES). A helical transmembrane segment spans residues 51–71 (AVSHLDTIVMPIIFTVLGMFT). At 72–148 (RMYKIGRNNH…IDYVKMRLFQ (77 aa)) the chain is on the lumenal side. N-linked (GlcNAc...) asparagine glycosylation occurs at N124. Residues 149 to 169 (AMFSSLCVPLAYFTGRAIGFS) traverse the membrane as a helical segment. The Cytoplasmic segment spans residues 170–174 (RLSVW). A helical transmembrane segment spans residues 175–195 (LFTILVIFENSYATLGKFILL). The Lumenal segment spans residues 196–235 (DSMLLFFTVSSYFCLAKFHTMRKSPFSARWWLWLCLTGLN). The helical transmembrane segment at 236–256 (LGCAISVKMVGLFIISVVGIY) threads the bilayer. The Cytoplasmic portion of the chain corresponds to 257–282 (TISELWNLLSDRSVSWKVYVNHWLAR). The chain crosses the membrane as a helical span at residues 283–303 (IFGLIIIPVCVFLLCFKIHFD). The Lumenal portion of the chain corresponds to 304 to 602 (LLSNSGPGDS…IKYFLLGSPA (299 aa)). An N-linked (GlcNAc...) asparagine glycan is attached at N324. One can recognise an MIR 1 domain in the interval 332–387 (PRDVALGSSIISIKNQALGGALLHSHVQPFPEGSEQQQVTVYGYSDANNEWFFQRI). N-linked (GlcNAc...) asparagine glycosylation is present at N398. MIR domains follow at residues 401-457 (IEFV…IEIV) and 465-523 (PTLL…IETH). Residues 603–623 (SVWPSSIAVCALIIHVIFLTL) traverse the membrane as a helical segment. At 624–639 (KWQRQCVILSDPVERD) the chain is on the cytoplasmic side. The helical transmembrane segment at 640 to 660 (VFVMAAFYPLLAWLLHYMPFV) threads the bilayer. Topologically, residues 661-665 (VMSRV) are lumenal. Residues 666-686 (VYAHHYLPTLYFALMILSYYF) form a helical membrane-spanning segment. At 687–703 (DMITKRWATRNTGKFLR) the chain is on the cytoplasmic side. The helical transmembrane segment at 704-724 (LGAYIVYGSIVIAGFFYFSPF) threads the bilayer. Over 725 to 753 (SFGMDGPVDDYAYLAWLPTWQIVEDIRNT) the chain is Lumenal.

It belongs to the glycosyltransferase 39 family. As to quaternary structure, PMT3 and PMT5 form a functional heterodimer. Also forms a minor complex with PMT1.

The protein localises to the endoplasmic reticulum membrane. It carries out the reaction a di-trans,poly-cis-dolichyl beta-D-mannosyl phosphate + L-seryl-[protein] = 3-O-(alpha-D-mannosyl)-L-seryl-[protein] + a di-trans,poly-cis-dolichyl phosphate + H(+). The catalysed reaction is a di-trans,poly-cis-dolichyl beta-D-mannosyl phosphate + L-threonyl-[protein] = 3-O-(alpha-D-mannosyl)-L-threonyl-[protein] + a di-trans,poly-cis-dolichyl phosphate + H(+). The protein operates within protein modification; protein glycosylation. Functionally, protein O-mannosyltransferase involved in O-glycosylation which is essential for cell wall rigidity. Forms a heterodimeric complex with PMT5 and more rarely with PMT1 to transfer mannose from Dol-P-mannose to Ser or Thr residues on proteins. Seems to have redundant activity to PMT2. The sequence is that of Dolichyl-phosphate-mannose--protein mannosyltransferase 3 from Saccharomyces cerevisiae (strain ATCC 204508 / S288c) (Baker's yeast).